The following is a 141-amino-acid chain: Hemoglobin subunit alpha-1/2 (141 aa).

One can recognise a Globin domain in the interval 1–141 (VLSPADKTNV…VSTVLTSKYR (141 aa)). Ser3 is subject to Phosphoserine. Lys7 is subject to N6-succinyllysine. Thr8 is subject to Phosphothreonine. At Lys11 the chain carries N6-succinyllysine. The residue at position 16 (Lys16) is an N6-acetyllysine; alternate. At Lys16 the chain carries N6-succinyllysine; alternate. At Tyr24 the chain carries Phosphotyrosine. Position 40 is an N6-succinyllysine (Lys40). Ser49 bears the Phosphoserine mark. Residue His58 participates in O2 binding. His87 provides a ligand contact to heme b. Residue Ser102 is modified to Phosphoserine. Thr108 carries the post-translational modification Phosphothreonine. Phosphoserine is present on Ser124. A phosphothreonine mark is found at Thr134 and Thr137. At Ser138 the chain carries Phosphoserine.

The protein belongs to the globin family. Heterotetramer of two alpha chains and two beta chains. Red blood cells.

Its function is as follows. Involved in oxygen transport from the lung to the various peripheral tissues. The chain is Hemoglobin subunit alpha-1/2 from Leptonychotes weddellii (Weddell seal).